The sequence spans 234 residues: Probable cyclic nucleotide phosphodiesterase Rmag_0669 (234 aa).

Positions 11, 13, 49, 79, 145, 184, and 186 each coordinate Fe cation. AMP contacts are provided by residues H13, D49, and 79–80; that span reads NH. H186 serves as a coordination point for AMP.

The protein belongs to the cyclic nucleotide phosphodiesterase class-III family. The cofactor is Fe(2+).

The polypeptide is Probable cyclic nucleotide phosphodiesterase Rmag_0669 (Ruthia magnifica subsp. Calyptogena magnifica).